The sequence spans 481 residues: MRQRTTIYNPYSSHDGIITNLNRTNFQLSSIPNHLFTIENKYTITTTTTQPNKSSLYSAIKELRIQTKFNNNESGIPIFSFHYEPGLNIYAVPQSNVDKLEFWQQVEQLIMELLGIKLSSQQWIANVNSFYYHDIQPQPLLNLKEGWKFNLHPKSNYDYIYNQDKIIIRELLTNVSEIEFNLESGIYKEIGLFLIDEKISTNDDLNLSGIRVILDEDSNTNNKEESIHKTMFHIKPRHRSFDDSTTITTTKIIPQGLHPILSTELNTTTIVIPTDFDVEECKFYYYLNLNKSLIFDQFQNIPIGSQLIINNGNKNLELPEYKINQWGNELLFEFEFDNDNDIPHHINLTVHSRYQLPQNNHSHSQISNVLNSLPNIFIGCNVKEGNLLDKSPFDTKRDVKIGGNYEIYFTEDTVFYHLQNSDNSGNSGSSTLLEINIPHGKTTFDRVNNITSLGLLIGVLMILYAISIRVFMSTTSKTKRD.

The Lumenal portion of the chain corresponds to 1-451; it reads MRQRTTIYNP…TTFDRVNNIT (451 aa). Residues Asn-22, Asn-52, Asn-72, Asn-174, Asn-206, Asn-266, Asn-290, Asn-347, Asn-360, and Asn-449 are each glycosylated (N-linked (GlcNAc...) asparagine). The helical transmembrane segment at 452-472 threads the bilayer; that stretch reads SLGLLIGVLMILYAISIRVFM. Over 473-481 the chain is Cytoplasmic; that stretch reads STTSKTKRD.

Belongs to the PIGX family.

The protein resides in the endoplasmic reticulum membrane. It functions in the pathway glycolipid biosynthesis; glycosylphosphatidylinositol-anchor biosynthesis. Functionally, required for proper folding and/or the stability of a subset of proteins in the endoplasmic reticulum. Component of glycosylphosphatidylinositol-mannosyltransferase 1 which transfers the first of the 4 mannoses in the GPI-anchor precursors during GPI-anchor biosynthesis. Probably acts by stabilizing the mannosyltransferase GPI14. In Candida albicans (strain SC5314 / ATCC MYA-2876) (Yeast), this protein is Protein PBN1 (PBN1).